Consider the following 190-residue polypeptide: Elongation factor P-like protein (190 aa).

It belongs to the elongation factor P family.

The sequence is that of Elongation factor P-like protein from Escherichia fergusonii (strain ATCC 35469 / DSM 13698 / CCUG 18766 / IAM 14443 / JCM 21226 / LMG 7866 / NBRC 102419 / NCTC 12128 / CDC 0568-73).